We begin with the raw amino-acid sequence, 458 residues long: RuvB-like protein 1 (458 aa).

Residue 73–80 (GPPGTGKT) participates in ATP binding.

This sequence belongs to the RuvB family. In terms of assembly, interacts with FRI, and with FLX and FES1, two component of the transcription activator complex FRI-C. Interacts with the disease resistance genes RPM1 and RPP5.

The protein resides in the nucleus. The enzyme catalyses ATP + H2O = ADP + phosphate + H(+). Functionally, proposed core component of the chromatin remodeling INO80 complex which is involved in transcriptional regulation, DNA replication and probably DNA repair. Component of the NuA4 histone acetyltransferase complex which is involved in transcriptional activation of select genes principally by acetylation of nucleosomal histones H4 and H2A. Has single-stranded DNA-stimulated ATPase and ATP-dependent DNA helicase (3' to 5') activity suggesting a role in nuclear processes such as recombination and transcription. In Arabidopsis thaliana (Mouse-ear cress), this protein is RuvB-like protein 1 (RIN1).